The following is a 148-amino-acid chain: NADPH-dependent 7-cyano-7-deazaguanine reductase (148 aa).

The Thioimide intermediate role is filled by C50. The Proton donor role is filled by D57. Substrate contacts are provided by residues 72–74 (VES) and 91–92 (HE).

It belongs to the GTP cyclohydrolase I family. QueF type 1 subfamily.

Its subcellular location is the cytoplasm. It catalyses the reaction 7-aminomethyl-7-carbaguanine + 2 NADP(+) = 7-cyano-7-deazaguanine + 2 NADPH + 3 H(+). The protein operates within tRNA modification; tRNA-queuosine biosynthesis. Catalyzes the NADPH-dependent reduction of 7-cyano-7-deazaguanine (preQ0) to 7-aminomethyl-7-deazaguanine (preQ1). The chain is NADPH-dependent 7-cyano-7-deazaguanine reductase from Helicobacter pylori (strain J99 / ATCC 700824) (Campylobacter pylori J99).